The following is a 382-amino-acid chain: 1-deoxy-D-xylulose 5-phosphate reductoisomerase (382 aa).

Residues T11, G12, S13, I14, and N123 each contribute to the NADPH site. K124 is a binding site for 1-deoxy-D-xylulose 5-phosphate. E125 provides a ligand contact to NADPH. D149 lines the Mn(2+) pocket. Positions 150, 151, 173, and 196 each coordinate 1-deoxy-D-xylulose 5-phosphate. Position 151 (E151) interacts with Mn(2+). G202 contacts NADPH. Positions 209, 214, 215, and 218 each coordinate 1-deoxy-D-xylulose 5-phosphate. E218 contributes to the Mn(2+) binding site.

The protein belongs to the DXR family. Mg(2+) serves as cofactor. Mn(2+) is required as a cofactor.

It catalyses the reaction 2-C-methyl-D-erythritol 4-phosphate + NADP(+) = 1-deoxy-D-xylulose 5-phosphate + NADPH + H(+). It functions in the pathway isoprenoid biosynthesis; isopentenyl diphosphate biosynthesis via DXP pathway; isopentenyl diphosphate from 1-deoxy-D-xylulose 5-phosphate: step 1/6. In terms of biological role, catalyzes the NADPH-dependent rearrangement and reduction of 1-deoxy-D-xylulose-5-phosphate (DXP) to 2-C-methyl-D-erythritol 4-phosphate (MEP). In Phocaeicola vulgatus (strain ATCC 8482 / DSM 1447 / JCM 5826 / CCUG 4940 / NBRC 14291 / NCTC 11154) (Bacteroides vulgatus), this protein is 1-deoxy-D-xylulose 5-phosphate reductoisomerase.